Consider the following 129-residue polypeptide: Small ribosomal subunit protein uS11c (129 aa).

This sequence belongs to the universal ribosomal protein uS11 family. Part of the 30S ribosomal subunit.

Its subcellular location is the plastid. It localises to the chloroplast. This chain is Small ribosomal subunit protein uS11c, found in Pleurastrum terricola (Filamentous green alga).